We begin with the raw amino-acid sequence, 348 residues long: GDSL esterase/lipase At4g30140 (348 aa).

Positions 1–28 (MVEGESKALWIILATVFAVAAVAPAVHG) are cleaved as a signal peptide. The active-site Nucleophile is Ser-40. Catalysis depends on residues Asp-316 and His-319. A glycan (N-linked (GlcNAc...) asparagine) is linked at Asn-342.

The protein belongs to the 'GDSL' lipolytic enzyme family.

Its subcellular location is the secreted. This Arabidopsis thaliana (Mouse-ear cress) protein is GDSL esterase/lipase At4g30140.